Here is a 256-residue protein sequence, read N- to C-terminus: MLSRVVLSAAATAAPSLKNAAFLGPGVLQATRTFHTGQPHLVPVPPLPEYGGKVRYGLIPEEFFQFLYPKTGVTGPYVLGTGLILYALSKEIYVISAETFTALSVLGVMVYGIKKYGPFVADFADKLNEQKLAQLEEAKQASIQHIQNAIDTEKSQQALVQKRHYLFDVQRNNIAMALEVTYRERLYRVYKEVKNRLDYHISVQNMMRRKEQEHMINWVEKHVVQSISTQQEKETIAKCIADLKLLAKKAQAQPVM.

The transit peptide at 1–42 (MLSRVVLSAAATAAPSLKNAAFLGPGVLQATRTFHTGQPHLV) directs the protein to the mitochondrion. K131 bears the N6-succinyllysine mark. N6-acetyllysine is present on residues K139, K154, K162, K221, K233, and K244.

This sequence belongs to the eukaryotic ATPase B chain family. In terms of assembly, component of the ATP synthase complex composed at least of ATP5F1A/subunit alpha, ATP5F1B/subunit beta, ATP5MC1/subunit c (homooctomer), MT-ATP6/subunit a, MT-ATP8/subunit 8, ATP5ME/subunit e, ATP5MF/subunit f, ATP5MG/subunit g, ATP5MK/subunit k, ATP5MJ/subunit j, ATP5F1C/subunit gamma, ATP5F1D/subunit delta, ATP5F1E/subunit epsilon, ATP5PF/subunit F6, ATP5PB/subunit b, ATP5PD/subunit d, ATP5PO/subunit OSCP. ATP synthase complex consists of a soluble F(1) head domain (subunits alpha(3) and beta(3)) - the catalytic core - and a membrane F(0) domain - the membrane proton channel (subunits c, a, 8, e, f, g, k and j). These two domains are linked by a central stalk (subunits gamma, delta, and epsilon) rotating inside the F1 region and a stationary peripheral stalk (subunits F6, b, d, and OSCP).

It is found in the mitochondrion. It localises to the mitochondrion inner membrane. Its function is as follows. Subunit b, of the mitochondrial membrane ATP synthase complex (F(1)F(0) ATP synthase or Complex V) that produces ATP from ADP in the presence of a proton gradient across the membrane which is generated by electron transport complexes of the respiratory chain. ATP synthase complex consist of a soluble F(1) head domain - the catalytic core - and a membrane F(1) domain - the membrane proton channel. These two domains are linked by a central stalk rotating inside the F(1) region and a stationary peripheral stalk. During catalysis, ATP synthesis in the catalytic domain of F(1) is coupled via a rotary mechanism of the central stalk subunits to proton translocation. In vivo, can only synthesize ATP although its ATP hydrolase activity can be activated artificially in vitro. Part of the complex F(0) domain. Part of the complex F(0) domain and the peripheric stalk, which acts as a stator to hold the catalytic alpha(3)beta(3) subcomplex and subunit a/ATP6 static relative to the rotary elements. This is ATP synthase peripheral stalk subunit b, mitochondrial from Homo sapiens (Human).